Reading from the N-terminus, the 317-residue chain is Melanocyte-stimulating hormone receptor (317 aa).

Over 1 to 37 the chain is Extracellular; the sequence is MPVLGSQRRLLGSLNCTPPATFPLTLAPNRTGPQCLE. A glycan (N-linked (GlcNAc...) asparagine) is linked at Asn29. The chain crosses the membrane as a helical span at residues 38 to 63; sequence VSIPDGLFLSLGLVSLVENVLVVAAI. At 64 to 72 the chain is on the cytoplasmic side; the sequence is AKNRNLHSP. Residues 73-93 traverse the membrane as a helical segment; sequence MYYFICCLAVSDLLVSVSNVL. Topologically, residues 94–118 are extracellular; the sequence is ETAVMLLLEAGALAARAAVVQQLDN. Residues 119–140 traverse the membrane as a helical segment; sequence VIDMLICGSMVSSLCFLGAIAV. Over 141-163 the chain is Cytoplasmic; sequence DRYISIFYALRYHSVVTLPRAWR. Residues 164–183 form a helical membrane-spanning segment; sequence IIAAIWVASILTSLLFITYY. Residues 184–191 lie on the Extracellular side of the membrane; that stretch reads NHTVVLLC. A helical transmembrane segment spans residues 192-211; that stretch reads LVGFFIAMLALMAVLYVHML. The Cytoplasmic portion of the chain corresponds to 212 to 240; it reads ARACQHARGIARLQKRQRPIHQGFGLKGA. The chain crosses the membrane as a helical span at residues 241 to 266; it reads ATLTILLGVFFLCWGPFFLHLSLIVL. Residues 267 to 279 lie on the Extracellular side of the membrane; it reads CPQHPTCGCIFKN. A helical transmembrane segment spans residues 280–300; the sequence is FNLFLALIICNAIVDPLIYAF. The Cytoplasmic portion of the chain corresponds to 301-317; that stretch reads RSQELRKTLQEVLQCSW. Cys315 carries the S-palmitoyl cysteine lipid modification.

This sequence belongs to the G-protein coupled receptor 1 family. As to quaternary structure, interacts with MGRN1, but does not undergo MGRN1-mediated ubiquitination; this interaction competes with GNAS-binding and thus inhibits agonist-induced cAMP production. Interacts with OPN3; the interaction results in a decrease in MC1R-mediated cAMP signaling and ultimately a decrease in melanin production in melanocytes.

The protein localises to the cell membrane. Functionally, receptor for MSH (alpha, beta and gamma) and ACTH. The activity of this receptor is mediated by G proteins which activate adenylate cyclase. Mediates melanogenesis, the production of eumelanin (black/brown) and phaeomelanin (red/yellow), via regulation of cAMP signaling in melanocytes. In Capreolus capreolus (European roe deer), this protein is Melanocyte-stimulating hormone receptor (MC1R).